Here is a 279-residue protein sequence, read N- to C-terminus: Dehydrogenase/reductase SDR family member 4 (279 aa).

An NADP(+)-binding site is contributed by 37 to 61; the sequence is LVTASTDGIGLAIARRLAEDGAHVV. Lys93 carries the post-translational modification N6-acetyllysine; alternate. Position 93 is an N6-succinyllysine; alternate (Lys93). Residue Lys106 is modified to N6-acetyllysine. Substrate is bound at residue Ser170. Tyr183 functions as the Proton acceptor in the catalytic mechanism. NADP(+) is bound at residue Lys187. Lys217 carries the N6-acetyllysine; alternate modification. At Lys217 the chain carries N6-succinyllysine; alternate. Phosphoserine is present on Ser221. N6-succinyllysine occurs at positions 228 and 235. Positions 277–279 match the Peroxisomal targeting signal motif; it reads SRL.

Belongs to the short-chain dehydrogenases/reductases (SDR) family. Homotetramer.

Its subcellular location is the peroxisome. It carries out the reaction a secondary alcohol + NADP(+) = a ketone + NADPH + H(+). The enzyme catalyses 3alpha-hydroxy-5beta-pregnan-20-one + NADP(+) = 5beta-pregnan-3,20-dione + NADPH + H(+). The catalysed reaction is 5beta-dihydrotestosterone + NADPH + H(+) = 5beta-androstane-3alpha,17beta-diol + NADP(+). It catalyses the reaction all-trans-retinol + NADP(+) = all-trans-retinal + NADPH + H(+). It carries out the reaction isatin + NADPH + H(+) = 3-hydroxyindolin-2-one + NADP(+). In terms of biological role, NADPH-dependent oxidoreductase which catalyzes the reduction of a variety of compounds bearing carbonyl groups including ketosteroids, alpha-dicarbonyl compounds, aldehydes, aromatic ketones and quinones. Reduces all-trans-retinal and 9-cis retinal. Reduces 3-ketosteroids and benzil into 3alpha-hydroxysteroids and S-benzoin, respectively, in contrast to the stereoselectivity of primates DHRS4s which produce 3beta-hydroxysteroids and R-benzoin. In the reverse reaction, catalyzes the NADP-dependent oxidation of 3alpha-hydroxysteroids and alcohol, but with much lower efficiency. Involved in the metabolism of 3alpha-hydroxysteroids, retinoid, isatin and xenobiotic carbonyl compounds. This Rattus norvegicus (Rat) protein is Dehydrogenase/reductase SDR family member 4 (Dhrs4).